A 329-amino-acid chain; its full sequence is Calcium homeostasis modulator protein (329 aa).

Residues 1-14 lie on the Cytoplasmic side of the membrane; sequence MTTSINSVVTVFQN. Residues 15–35 form a helical membrane-spanning segment; that stretch reads VFTNHGSTLLNGILIATTVGG. Topologically, residues 36–53 are extracellular; sequence QSLVRKLTFSCPCAYPLN. The chain crosses the membrane as a helical span at residues 54–74; the sequence is IYHSLVFMFGPTAALLLIGIT. Residues 75–103 lie on the Cytoplasmic side of the membrane; the sequence is VNSTTWKLAHGFFFRVRDTRHSWKTTCVS. Residues 104–124 traverse the membrane as a helical segment; sequence WIEVLIQSSVAPIAWLFVVFL. The Extracellular segment spans residues 125 to 191; that stretch reads DGGYYRCYRS…DASYLEAESQ (67 aa). An N-linked (GlcNAc...) asparagine glycan is attached at Asn148. The chain crosses the membrane as a helical span at residues 192 to 212; it reads IYAWGLLLFSGVAAFLVITCN. Residues 213–329 lie on the Cytoplasmic side of the membrane; the sequence is RMCDKYTLVQ…QIIVDETKED (117 aa).

The protein belongs to the CALHM family. In terms of tissue distribution, expressed in head and body wall muscles, IL2, ASG, ASI, ASJ, PHA and PHB sensory neurons, and spermatheca.

The protein localises to the cell membrane. In terms of biological role, pore-forming subunit of a voltage-gated ion channel. Permeable to monovalent cations, divalent cations and anions with selectivity Ca(2+) &gt; Mg(2+) &gt; Na(+) = K(+) &gt; Cl(-). Acts both as a voltage-gated and calcium-activated ion channel. Required for normal locomotion. This is Calcium homeostasis modulator protein from Caenorhabditis elegans.